A 214-amino-acid polypeptide reads, in one-letter code: 7-cyano-7-deazaguanine synthase (214 aa).

ATP is bound at residue 10–20 (FSGGQDSTTCL). Positions 184, 193, 196, and 199 each coordinate Zn(2+).

Belongs to the QueC family. In terms of assembly, homodimer. The cofactor is Zn(2+).

It carries out the reaction 7-carboxy-7-deazaguanine + NH4(+) + ATP = 7-cyano-7-deazaguanine + ADP + phosphate + H2O + H(+). Its pathway is purine metabolism; 7-cyano-7-deazaguanine biosynthesis. Catalyzes the ATP-dependent conversion of 7-carboxy-7-deazaguanine (CDG) to 7-cyano-7-deazaguanine (preQ(0)). The chain is 7-cyano-7-deazaguanine synthase from Exiguobacterium sp. (strain ATCC BAA-1283 / AT1b).